The chain runs to 303 residues: UDP-3-O-acyl-N-acetylglucosamine deacetylase (303 aa).

Zn(2+) contacts are provided by His78, His237, and Asp241. Residue His264 is the Proton donor of the active site.

This sequence belongs to the LpxC family. Requires Zn(2+) as cofactor.

The catalysed reaction is a UDP-3-O-[(3R)-3-hydroxyacyl]-N-acetyl-alpha-D-glucosamine + H2O = a UDP-3-O-[(3R)-3-hydroxyacyl]-alpha-D-glucosamine + acetate. It functions in the pathway glycolipid biosynthesis; lipid IV(A) biosynthesis; lipid IV(A) from (3R)-3-hydroxytetradecanoyl-[acyl-carrier-protein] and UDP-N-acetyl-alpha-D-glucosamine: step 2/6. Its function is as follows. Catalyzes the hydrolysis of UDP-3-O-myristoyl-N-acetylglucosamine to form UDP-3-O-myristoylglucosamine and acetate, the committed step in lipid A biosynthesis. This Coxiella burnetii (strain CbuG_Q212) (Coxiella burnetii (strain Q212)) protein is UDP-3-O-acyl-N-acetylglucosamine deacetylase.